The following is a 297-amino-acid chain: CASP-like protein 2U8 (297 aa).

The Cytoplasmic segment spans residues 1-10 (MLELYEKRRA). A helical membrane pass occupies residues 11-31 (LLLLRLAAMFLSLAALLITVL). Over 32-64 (NREDGFFSINVFGSPQPILAKATADFTLVKGLK) the chain is Extracellular. The helical transmembrane segment at 65–85 (FFAGAMGIVAGYSFLQLAIAM) threads the bilayer. The Cytoplasmic portion of the chain corresponds to 86-101 (ASIFSGAPSILGGKRM). The chain crosses the membrane as a helical span at residues 102–122 (AWLCFVGDMTASHLCAAAAAV). Residues 123–148 (SAQLAYLGKRGAPMWSAVCTYFSHYC) lie on the Extracellular side of the membrane. The helical transmembrane segment at 149–169 (LVFGLAVILAFLATLAALLVA) threads the bilayer. Residues 170–297 (SISSYHLAYD…RVLEMETPCK (128 aa)) lie on the Cytoplasmic side of the membrane.

It belongs to the Casparian strip membrane proteins (CASP) family. In terms of assembly, homodimer and heterodimers.

It is found in the cell membrane. The sequence is that of CASP-like protein 2U8 from Selaginella moellendorffii (Spikemoss).